We begin with the raw amino-acid sequence, 385 residues long: Protein pelota homolog (385 aa).

Lys162 participates in a covalent cross-link: Glycyl lysine isopeptide (Lys-Gly) (interchain with G-Cter in SUMO2). Phosphoserine occurs at positions 374, 380, 381, and 382.

This sequence belongs to the eukaryotic release factor 1 family. Pelota subfamily. Component of the Pelota-HBS1L complex, also named Dom34-Hbs1 complex, composed of PELO and HBS1L. Interacts with PINK1. Interacts with ABCE1. Interacts with CNOT4. The cofactor is a divalent metal cation. Ubiquitously expressed.

The protein localises to the cytoplasm. In terms of biological role, component of the Pelota-HBS1L complex, a complex that recognizes stalled ribosomes and triggers the No-Go Decay (NGD) pathway. In the Pelota-HBS1L complex, PELO recognizes ribosomes stalled at the 3' end of an mRNA and engages stalled ribosomes by destabilizing mRNA in the mRNA channel. Following mRNA extraction from stalled ribosomes by the SKI complex, the Pelota-HBS1L complex promotes recruitment of ABCE1, which drives the disassembly of stalled ribosomes, followed by degradation of damaged mRNAs as part of the NGD pathway. As part of the PINK1-regulated signaling, upon mitochondrial damage is recruited to the ribosome/mRNA-ribonucleoprotein complex associated to mitochondrial outer membrane thereby enabling the recruitment of autophagy receptors and induction of mitophagy. The sequence is that of Protein pelota homolog from Homo sapiens (Human).